The primary structure comprises 799 residues: Protein-lysine N-methyltransferase SMYD4 (799 aa).

Arginine 112–alanine 114 serves as a coordination point for S-adenosyl-L-methionine. Residues leucine 233 to glycine 570 enclose the SET domain. Residues cysteine 296, cysteine 299, cysteine 309, cysteine 312, cysteine 318, cysteine 322, histidine 331, and cysteine 335 each coordinate Zn(2+). The MYND-type zinc-finger motif lies at cysteine 296 to cysteine 335. Residues asparagine 535 to histidine 536, tyrosine 569, and phenylalanine 591 contribute to the S-adenosyl-L-methionine site.

Belongs to the class V-like SAM-binding methyltransferase superfamily. As to quaternary structure, interacts (via MYND-type zinc finger) with HDAC1.

It localises to the nucleus. The protein localises to the cytoplasm. It catalyses the reaction L-lysyl-[protein] + S-adenosyl-L-methionine = N(6)-methyl-L-lysyl-[protein] + S-adenosyl-L-homocysteine + H(+). Its function is as follows. Protein-lysine N-methyltransferase. Monomethylates PRMT5, modulating its transcriptional activity. May also act as a histone methyltransferase. Plays a critical role in cardiac development. Acts as a key epigenetic regulator of gene expression during cardiac development via its dual activities as a methyltransferase and negative regulator of HDAC1. This chain is Protein-lysine N-methyltransferase SMYD4 (Smyd4), found in Mus musculus (Mouse).